The sequence spans 245 residues: MSEFTLYPAIDMRNGKCVRLVQGDYDQETIYGDSPLDMATRFANEGAKWIHLVDLDGAKAGNRVNHEHVLAIASSLDVKVQIGGGIRTEEDVAFYINNGVARVILGSSAVSNSAFVKKMLAQYGEKIAIGIDARNGFVSTEGWLETSKVKAEDLGKELAKEGAEVFIFTDIQMDGMLAGPNVESTVRLAEATGKQVIASGGISSVADLQKLSAQKQTGVSGAIIGKALYTERFTLAEAIEGLDRV.

Residue Asp11 is the Proton acceptor of the active site. Asp132 (proton donor) is an active-site residue.

The protein belongs to the HisA/HisF family.

It is found in the cytoplasm. The catalysed reaction is 1-(5-phospho-beta-D-ribosyl)-5-[(5-phospho-beta-D-ribosylamino)methylideneamino]imidazole-4-carboxamide = 5-[(5-phospho-1-deoxy-D-ribulos-1-ylimino)methylamino]-1-(5-phospho-beta-D-ribosyl)imidazole-4-carboxamide. Its pathway is amino-acid biosynthesis; L-histidine biosynthesis; L-histidine from 5-phospho-alpha-D-ribose 1-diphosphate: step 4/9. In Bacillus pumilus (strain SAFR-032), this protein is 1-(5-phosphoribosyl)-5-[(5-phosphoribosylamino)methylideneamino] imidazole-4-carboxamide isomerase.